Consider the following 610-residue polypeptide: E-selectin (610 aa).

Residues 1-21 (MIASQFLSALTLVLLIKESGA) form the signal peptide. The C-type lectin domain occupies 22 to 138 (WSYSASTTNM…CNKKKLALCY (117 aa)). Over 22-555 (WSYSASTTNM…CEATAKSNIP (534 aa)) the chain is Extracellular. N-linked (GlcNAc...) asparagine glycosylation occurs at Asn30. Intrachain disulfides connect Cys40–Cys137, Cys110–Cys129, Cys142–Cys153, Cys147–Cys162, Cys164–Cys173, Cys179–Cys223, Cys192–Cys205, Cys209–Cys236, Cys241–Cys285, Cys254–Cys267, Cys271–Cys298, Cys303–Cys348, Cys334–Cys361, Cys366–Cys411, Cys397–Cys424, Cys429–Cys474, Cys460–Cys487, Cys492–Cys533, and Cys519–Cys546. Glu101, Asn103, and Glu108 together coordinate Ca(2+). A carbohydrate contacts are provided by residues 101–108 (EPNNKQNE), 112–117 (EIYIKR), and 125–127 (NDE). Ca(2+) is bound by residues Asn125 and Asp126. The EGF-like domain occupies 139-174 (TAACTHTSCSGHGECVETINNYTCQCHPGFTGLRCE). Residue Asn159 is glycosylated (N-linked (GlcNAc...) asparagine). 6 consecutive Sushi domains span residues 177–238 (VTCQ…ACHV), 239–300 (VECD…TCKA), 314–363 (VNCS…VCKA), 365–426 (QCKA…TCEA), 428–489 (RCDA…SCQV), and 490–548 (VQCA…TCEA). Residues Asn198 and Asn202 are each glycosylated (N-linked (GlcNAc...) asparagine). N-linked (GlcNAc...) asparagine glycosylation occurs at Asn264. N-linked (GlcNAc...) asparagine glycans are attached at residues Asn315, Asn327, and Asn331. Asn526 carries N-linked (GlcNAc...) asparagine glycosylation. A helical membrane pass occupies residues 556 to 577 (LTVGLSAAGTSLLTLASFLFWL). Residues 578–610 (LKRLRRKAKKFVPASSYQSLQSDGSYQMPSESA) are Cytoplasmic-facing.

This sequence belongs to the selectin/LECAM family. Interacts with SELPLG/PSGL1 and PODXL2 through the sialyl Lewis X epitope. SELPLG sulfation appears not to be required for this interaction.

The protein localises to the cell membrane. Its function is as follows. Cell-surface glycoprotein having a role in immunoadhesion. Mediates in the adhesion of blood neutrophils in cytokine-activated endothelium through interaction with SELPLG/PSGL1. May have a role in capillary morphogenesis. In Equus caballus (Horse), this protein is E-selectin (SELE).